The sequence spans 722 residues: Protein HAPLESS 2-A (722 aa).

A signal peptide spans 1–24 (MPRRRGTPLPTILLLLAFVGGACG). The Extracellular segment spans residues 25 to 552 (TEILSKSRLE…LFDFGCHIQY (528 aa)). Disulfide bonds link Cys36–Cys48, Cys129–Cys159, Cys141–Cys188, Cys160–Cys315, Cys162–Cys171, Cys298–Cys322, and Cys435–Cys473. The chain crosses the membrane as a helical span at residues 553-573 (VCIGWILLLLLIPAAVVFLWL). The Cytoplasmic segment spans residues 574 to 722 (LHQEGLFDPL…HRDGHYSPSV (149 aa)). The segment covering 598–641 (RRRHQKGRHHRHHHDHRHRHGHSHGDHHHHYHGGHHQRRRHHHP) has biased composition (basic residues). Disordered regions lie at residues 598–665 (RRRH…RNHH) and 680–722 (RLDR…SPSV). Over residues 646-662 (VEGHHHDRQQHSHEAGR) the composition is skewed to basic and acidic residues. The span at 701–711 (RRSRHERHGGH) shows a compositional bias: basic residues. Basic and acidic residues predominate over residues 712-722 (GHRDGHYSPSV).

Belongs to the HAP2/GCS1 family.

Its subcellular location is the endoplasmic reticulum membrane. The protein resides in the cell membrane. Required for male fertility. Plays a role in pollen tube guidance and successful gamete attachment. Essential for the fusion of gametes during double fertilization, where one male gamete fuses with the egg to produce a zygote, and another male gamete fuses with the central cell to produce the endosperm. Mediates the fusion of cell membranes. Not required for pollen tube outgrowth. The protein is Protein HAPLESS 2-A (HAP2A) of Oryza sativa subsp. japonica (Rice).